The chain runs to 92 residues: MVVTTSDVVMCQMRHSDVQGVYRVYGSWMAENFQDQVSISNQIMSKFAPSMPHAVRSDVINNRLHNLYLHAHYFLICRHQLITHLNPHLHRN.

This sequence belongs to the 'phage' integrase family.

The sequence is that of Putative lambdoid prophage defective integrase (intG) from Escherichia coli O157:H7.